The chain runs to 357 residues: MKVDPNKEKALAAVLSQIEKQFGKGSIMKLGEDRSMDVETISTGSLSLDVALGAGGLPMGRIVEIYGPESSGKTTLTLEVIAAAQREGKTCAFIDAEHALDPIYAKKLGVDIDNLLCSQPDTGEQALEICDALTRSGAVDVIIVDSVAALTPKAEIEGEIGDSHMGLAARMMSQAMRKLAGNLKQSNTLLIFINQIRMKIGVMFGNPETTTGGNALKFYASVRLDIRRTGAIKEGDEVVGNETRVKVVKNKVAAPFKQAEFQILYGQGINRTGELVDLGVAHKLIEKAGAWYSYKGDKIGQGRANAGKYLTENPAIAAEIDKTLRELLLSNPAALSSSASDDENSEGNVDFETGEVF.

67-74 (GPESSGKT) contributes to the ATP binding site. A disordered region spans residues 335-357 (LSSSASDDENSEGNVDFETGEVF).

Belongs to the RecA family.

The protein localises to the cytoplasm. Its function is as follows. Can catalyze the hydrolysis of ATP in the presence of single-stranded DNA, the ATP-dependent uptake of single-stranded DNA by duplex DNA, and the ATP-dependent hybridization of homologous single-stranded DNAs. It interacts with LexA causing its activation and leading to its autocatalytic cleavage. This chain is Protein RecA, found in Shewanella sp. (strain MR-4).